Here is a 150-residue protein sequence, read N- to C-terminus: 2-aminobenzenesulfonate 2,3-dioxygenase subunit beta (150 aa).

The protein belongs to the bacterial ring-hydroxylating dioxygenase beta subunit family. In terms of assembly, heterotetramer with a alpha2beta2 structure.

It carries out the reaction 2-aminobenzenesulfonate + NADH + O2 + 2 H(+) = 2,3-dihydroxybenzenesulfonate + NH4(+) + NAD(+). Its activity is regulated as follows. Inhibited by o-phenanthroline. Its function is as follows. Beta subunit of the oxygenase component of the 2-aminobenzenesulfonate 2,3-dioxygenase system (deaminating) (ABSDOS). Can use 2-aminobenzenesulfonate (ABS), benzenesulfonate (BS), 4-toluenesulfonate (TS), 2-nitrobenzenesulfonate, 3- and 4-aminobenzenesulfonates, 4-chloro- and 4-hydroxybenzenesulfonates and pyridine-3-sulfonate as substrates. No desulfonation of ABS to aminocatechol or aminophenol detected. The protein is 2-aminobenzenesulfonate 2,3-dioxygenase subunit beta of Alcaligenes sp.